The following is a 349-amino-acid chain: Phenylalanine--tRNA ligase alpha subunit (349 aa).

A Mg(2+)-binding site is contributed by E259.

It belongs to the class-II aminoacyl-tRNA synthetase family. Phe-tRNA synthetase alpha subunit type 1 subfamily. In terms of assembly, tetramer of two alpha and two beta subunits. It depends on Mg(2+) as a cofactor.

Its subcellular location is the cytoplasm. The catalysed reaction is tRNA(Phe) + L-phenylalanine + ATP = L-phenylalanyl-tRNA(Phe) + AMP + diphosphate + H(+). This chain is Phenylalanine--tRNA ligase alpha subunit, found in Lactobacillus gasseri (strain ATCC 33323 / DSM 20243 / BCRC 14619 / CIP 102991 / JCM 1131 / KCTC 3163 / NCIMB 11718 / NCTC 13722 / AM63).